The following is a 337-amino-acid chain: Glyceraldehyde-3-phosphate dehydrogenase (337 aa).

NAD(+) contacts are provided by residues 12–13 (RI), aspartate 34, and lysine 79. D-glyceraldehyde 3-phosphate contacts are provided by residues 150 to 152 (SCT), threonine 181, 210 to 211 (TG), and arginine 233. Cysteine 151 acts as the Nucleophile in catalysis. Asparagine 315 contributes to the NAD(+) binding site.

This sequence belongs to the glyceraldehyde-3-phosphate dehydrogenase family. As to quaternary structure, homotetramer.

It localises to the cytoplasm. It catalyses the reaction D-glyceraldehyde 3-phosphate + phosphate + NAD(+) = (2R)-3-phospho-glyceroyl phosphate + NADH + H(+). It functions in the pathway carbohydrate degradation; glycolysis; pyruvate from D-glyceraldehyde 3-phosphate: step 1/5. The sequence is that of Glyceraldehyde-3-phosphate dehydrogenase (GPD) from Schizophyllum commune (Split gill fungus).